A 1101-amino-acid polypeptide reads, in one-letter code: Coiled-coil domain-containing protein 150 (1101 aa).

Coiled-coil stretches lie at residues 106–299, 398–680, 712–940, and 970–1033; these read RLES…DLTS, AAHA…KEDN, DSEI…NYEQ, and VRNK…EAHR. The segment covering 1055-1071 has biased composition (basic and acidic residues); the sequence is SGEDRWQEKDQDVKHDV. The interval 1055–1101 is disordered; the sequence is SGEDRWQEKDQDVKHDVMSNQSVLHRWERKQNLRPMPKKYHSEVQRK.

This is Coiled-coil domain-containing protein 150 (CCDC150) from Homo sapiens (Human).